We begin with the raw amino-acid sequence, 318 residues long: Gamma-glutamyl hydrolase (318 aa).

A signal peptide spans 1-24 (MASPGCLLCVLGLLLCGAASLELS). A Gamma-glutamyl hydrolase domain is found at 25 to 318 (RPHGDTAKKP…SSFQQCYIFD (294 aa)). An N-linked (GlcNAc...) asparagine glycan is attached at N116. The Nucleophile role is filled by C134. N163 and N203 each carry an N-linked (GlcNAc...) asparagine glycan. The active-site Proton donor is H244. An N-linked (GlcNAc...) asparagine; partial glycan is attached at N307.

Belongs to the peptidase C26 family. Homodimer.

Its subcellular location is the secreted. The protein resides in the extracellular space. It localises to the lysosome. The protein localises to the melanosome. It carries out the reaction (6S)-5,6,7,8-tetrahydrofolyl-(gamma-L-Glu)(n) + (n-1) H2O = (6S)-5,6,7,8-tetrahydrofolate + (n-1) L-glutamate. Its function is as follows. Hydrolyzes the polyglutamate sidechains of pteroylpolyglutamates. Progressively removes gamma-glutamyl residues from pteroylpoly-gamma-glutamate to yield pteroyl-alpha-glutamate (folic acid) and free glutamate. May play an important role in the bioavailability of dietary pteroylpolyglutamates and in the metabolism of pteroylpolyglutamates and antifolates. The chain is Gamma-glutamyl hydrolase from Homo sapiens (Human).